The primary structure comprises 545 residues: Chaperonin GroEL 3 (545 aa).

ATP is bound by residues 29-32, 86-90, glycine 413, 479-481, and aspartate 495; these read TLGP, DGTTT, and DAV. Residues 526 to 545 are disordered; sequence DKQAKAPAGVGPGPGEGFDY. Residues 535–545 are compositionally biased toward gly residues; the sequence is VGPGPGEGFDY.

The protein belongs to the chaperonin (HSP60) family. As to quaternary structure, forms a cylinder of 14 subunits composed of two heptameric rings stacked back-to-back. Interacts with the co-chaperonin GroES.

Its subcellular location is the cytoplasm. It carries out the reaction ATP + H2O + a folded polypeptide = ADP + phosphate + an unfolded polypeptide.. Together with its co-chaperonin GroES, plays an essential role in assisting protein folding. The GroEL-GroES system forms a nano-cage that allows encapsulation of the non-native substrate proteins and provides a physical environment optimized to promote and accelerate protein folding. This Trichormus variabilis (strain ATCC 29413 / PCC 7937) (Anabaena variabilis) protein is Chaperonin GroEL 3.